The primary structure comprises 102 residues: Large ribosomal subunit protein bL21 (102 aa).

This sequence belongs to the bacterial ribosomal protein bL21 family. In terms of assembly, part of the 50S ribosomal subunit. Contacts protein L20.

In terms of biological role, this protein binds to 23S rRNA in the presence of protein L20. The polypeptide is Large ribosomal subunit protein bL21 (Bifidobacterium animalis subsp. lactis (strain AD011)).